Here is a 304-residue protein sequence, read N- to C-terminus: Protoheme IX farnesyltransferase 1 (304 aa).

The next 8 membrane-spanning stretches (helical) occupy residues 24–44 (VVVLMLITSLIGMLLATKAPL), 47–67 (FVPWQVLIFGNLGIGLCAGAA), 99–119 (MALGFALLLALAGMAVLLAFT), 122–142 (LTAWLTLASLLGYAALYTGFL), 150–170 (IVIGGLAGAAPPLLGWVAITG), 176–196 (PLLLVLIIFAWTPPHFWALCI), 228–248 (LVLFAVSLMPFVIHMSGLVYL), and 280–300 (YSIVYLFLLFMALLVDHYLPL).

The protein belongs to the UbiA prenyltransferase family. Protoheme IX farnesyltransferase subfamily.

The protein localises to the cell inner membrane. It carries out the reaction heme b + (2E,6E)-farnesyl diphosphate + H2O = Fe(II)-heme o + diphosphate. It functions in the pathway porphyrin-containing compound metabolism; heme O biosynthesis; heme O from protoheme: step 1/1. In terms of biological role, converts heme B (protoheme IX) to heme O by substitution of the vinyl group on carbon 2 of heme B porphyrin ring with a hydroxyethyl farnesyl side group. This chain is Protoheme IX farnesyltransferase 1, found in Pseudomonas aeruginosa (strain UCBPP-PA14).